A 444-amino-acid polypeptide reads, in one-letter code: Ribosomal protein uS12 methylthiotransferase RimO (444 aa).

The MTTase N-terminal domain maps to 6-116; the sequence is PNIGFVSLGC…VMEHVHKYVP (111 aa). Residues Cys-15, Cys-51, Cys-80, Cys-148, Cys-152, and Cys-155 each coordinate [4Fe-4S] cluster. Positions 134–375 constitute a Radical SAM core domain; the sequence is LTPKHYAYLK…MQLQQEISAA (242 aa). One can recognise a TRAM domain in the interval 378-444; that stretch reads QQKIGKTWKV…ADEYDLWGTC (67 aa).

This sequence belongs to the methylthiotransferase family. RimO subfamily. [4Fe-4S] cluster is required as a cofactor.

Its subcellular location is the cytoplasm. It carries out the reaction L-aspartate(89)-[ribosomal protein uS12]-hydrogen + (sulfur carrier)-SH + AH2 + 2 S-adenosyl-L-methionine = 3-methylsulfanyl-L-aspartate(89)-[ribosomal protein uS12]-hydrogen + (sulfur carrier)-H + 5'-deoxyadenosine + L-methionine + A + S-adenosyl-L-homocysteine + 2 H(+). Catalyzes the methylthiolation of an aspartic acid residue of ribosomal protein uS12. In Actinobacillus succinogenes (strain ATCC 55618 / DSM 22257 / CCUG 43843 / 130Z), this protein is Ribosomal protein uS12 methylthiotransferase RimO.